The chain runs to 138 residues: DNA-directed RNA polymerase subunit omega (138 aa).

Residues 117-138 (NLLGRDNFFSTPENRNTSNTDS) are disordered. Over residues 124-138 (FFSTPENRNTSNTDS) the composition is skewed to polar residues.

This sequence belongs to the RNA polymerase subunit omega family. In terms of assembly, the RNAP catalytic core consists of 2 alpha, 1 beta, 1 beta' and 1 omega subunit. When a sigma factor is associated with the core the holoenzyme is formed, which can initiate transcription.

It carries out the reaction RNA(n) + a ribonucleoside 5'-triphosphate = RNA(n+1) + diphosphate. Functionally, promotes RNA polymerase assembly. Latches the N- and C-terminal regions of the beta' subunit thereby facilitating its interaction with the beta and alpha subunits. The chain is DNA-directed RNA polymerase subunit omega from Ehrlichia canis (strain Jake).